A 200-amino-acid polypeptide reads, in one-letter code: 7-methyl-GTP pyrophosphatase (200 aa).

D69 functions as the Proton acceptor in the catalytic mechanism.

The protein belongs to the Maf family. YceF subfamily. A divalent metal cation serves as cofactor.

It is found in the cytoplasm. The enzyme catalyses N(7)-methyl-GTP + H2O = N(7)-methyl-GMP + diphosphate + H(+). Its function is as follows. Nucleoside triphosphate pyrophosphatase that hydrolyzes 7-methyl-GTP (m(7)GTP). May have a dual role in cell division arrest and in preventing the incorporation of modified nucleotides into cellular nucleic acids. The chain is 7-methyl-GTP pyrophosphatase from Colwellia psychrerythraea (strain 34H / ATCC BAA-681) (Vibrio psychroerythus).